The chain runs to 228 residues: MNPILKGVYSPARLGVVALTLFGILGVTGCSTAVDETQRAWMNKIFRPYVPDVVQGNFISSEQYAKLQLGMTREQVRQIMGTPLLASYFHANRWDYVFEFKRSGQTVGKERHVTVFFDGDKVVKFEGDALPTEVELVAEIDNYSKSKRSFWEVITDTNKLPVTPPLQQPEVLVTSKTDNLPAGAAVPAANTSGSFWDFFGSSKKDPDPQSPQLGPGTLNDVPKPADSK.

The first 29 residues, 1–29 (MNPILKGVYSPARLGVVALTLFGILGVTG), serve as a signal peptide directing secretion. Residue Cys30 is the site of N-palmitoyl cysteine attachment. Cys30 carries S-diacylglycerol cysteine lipidation. The segment at 197–228 (DFFGSSKKDPDPQSPQLGPGTLNDVPKPADSK) is disordered.

The protein belongs to the BamE family. As to quaternary structure, part of the Bam complex.

The protein resides in the cell outer membrane. Functionally, part of the outer membrane protein assembly complex, which is involved in assembly and insertion of beta-barrel proteins into the outer membrane. The protein is Outer membrane protein assembly factor BamE of Polynucleobacter necessarius subsp. necessarius (strain STIR1).